A 377-amino-acid chain; its full sequence is N-acetyldiaminopimelate deacetylase (377 aa).

The active site involves Asp70. Glu129 serves as the catalytic Proton acceptor.

It belongs to the peptidase M20A family. N-acetyldiaminopimelate deacetylase subfamily.

The enzyme catalyses N-acetyl-(2S,6S)-2,6-diaminopimelate + H2O = (2S,6S)-2,6-diaminopimelate + acetate. The protein operates within amino-acid biosynthesis; L-lysine biosynthesis via DAP pathway; LL-2,6-diaminopimelate from (S)-tetrahydrodipicolinate (acetylase route): step 3/3. Catalyzes the conversion of N-acetyl-diaminopimelate to diaminopimelate and acetate. The chain is N-acetyldiaminopimelate deacetylase from Geobacillus thermodenitrificans (strain NG80-2).